A 316-amino-acid chain; its full sequence is Taste receptor type 2 member 109 (316 aa).

At 1–14 the chain is on the extracellular side; that stretch reads MEHLLKRTFDITEN. The chain crosses the membrane as a helical span at residues 15–35; the sequence is ILLIILFIELIIGLIGNGFTA. Residues 36-62 lie on the Cytoplasmic side of the membrane; sequence LVHCMDWVKRKKMSLVNKILTALATSR. The chain crosses the membrane as a helical span at residues 63–83; sequence IFLLWFMLVGFPISSLYPYLV. The Extracellular portion of the chain corresponds to 84–94; that stretch reads TTRLMIQFTST. Residues 95–115 traverse the membrane as a helical segment; it reads LWTIANHISVWFATCLSVFYF. Over 116-135 the chain is Cytoplasmic; it reads LKIANFSNSPFLYLKRRVEK. A helical transmembrane segment spans residues 136 to 156; the sequence is VVSVTLLVSLVLLFLNILLLN. Residues 157-191 are Extracellular-facing; it reads LEINMCINEYHQINISYIFISYYHLSCQIQVLGSH. Asn-170 carries an N-linked (GlcNAc...) asparagine glycan. Residues 192 to 212 form a helical membrane-spanning segment; that stretch reads IIFLSVPVVLSLSTFLLLIFS. Residues 213-241 are Cytoplasmic-facing; the sequence is LWTLHKRMQQHVQGGRDARTTAHFKALQA. Residues 242–262 form a helical membrane-spanning segment; it reads VIAFLLLYSIFILSLLLQFWI. Residues 263–270 lie on the Extracellular side of the membrane; sequence HGLRKKPP. A helical membrane pass occupies residues 271-291; sequence FIAFCQVVDTAFPSFHSYVLI. At 292 to 316 the chain is on the cytoplasmic side; it reads LRDRKLRHASLSVLSWLKCRPNYVK.

The protein belongs to the G-protein coupled receptor T2R family.

The protein resides in the membrane. Putative taste receptor which may play a role in the perception of bitterness. The polypeptide is Taste receptor type 2 member 109 (Mus musculus (Mouse)).